The chain runs to 665 residues: GRB2-associated-binding protein 2 (665 aa).

Ser2 carries the post-translational modification Phosphoserine. Residues 8 to 119 (DVVCTGWLRK…WVQSICQICG (112 aa)) enclose the PH domain. The interval 131–184 (RNLSSASHGPRSSPAEFSSSQHLLRERKSSAPSHSSQPTLFTFEPPVSSHMQPT) is disordered. Phosphoserine is present on residues Ser135, Ser142, Ser143, Ser149, Ser150, Ser160, Ser165, Ser211, Ser220, and Ser261. Residues 160-170 (SAPSHSSQPTL) show a composition bias toward polar residues. Thr262 bears the Phosphothreonine mark. Tyr263 carries the post-translational modification Phosphotyrosine. Phosphothreonine is present on Thr275. Ser278 and Ser282 each carry phosphoserine. A Phosphothreonine modification is found at Thr284. Tyr290 carries the post-translational modification Phosphotyrosine. Residue Thr328 is modified to Phosphothreonine. The disordered stretch occupies residues 338–396 (VATPGDSAIAPPPRPPKPSQAETSQWGSIQQRPPISENSRSVAATIPRRNTLPAMDNSR). Residues 348-355 (PPPRPPKP) carry the SH3-binding motif. Polar residues predominate over residues 357–379 (QAETSQWGSIQQRPPISENSRSV). A Phosphoserine modification is found at Ser365. 2 positions are modified to phosphothreonine: Thr382 and Thr388. At Ser402 the chain carries Phosphoserine. The residue at position 405 (Thr405) is a Phosphothreonine. The segment at 408-445 (YPARGSGESASWSAEPPGKTAVGRSNSASSDDNYVPMN) is disordered. The residue at position 420 (Ser420) is a Phosphoserine. Positions 430–439 (GRSNSASSDD) are enriched in polar residues. The residue at position 441 (Tyr441) is a Phosphotyrosine. The residue at position 469 (Ser469) is a Phosphoserine. Positions 491 to 517 (PSRGSEIQPPPVNRNLKPDRKAKPTPL) are disordered. Positions 499–508 (PPPVNRNLKP) match the SH3-binding motif. A Phosphoserine modification is found at Ser532. 2 stretches are compositionally biased toward polar residues: residues 548–566 (SSSQ…STDS) and 578–600 (NPVS…STGS). Disordered stretches follow at residues 548 to 632 (SSSQ…KVDY) and 646 to 665 (TMQE…GAKL). A Phosphoserine modification is found at Ser612. Residue Tyr632 is modified to Phosphotyrosine. Residues 646–659 (TMQEWTDVRQSSEP) are compositionally biased toward polar residues.

Belongs to the GAB family. In terms of assembly, part of a complex composed of EEIG1, TNFRSF11A/RANK, PLCG2, GAB2, TEC and BTK; complex formation increases in the presence of TNFSF11/RANKL. Interacts with HCK. Interacts with SHC1; may mediate interaction with receptors. Interacts with SYK. Interacts with PI-3 kinase. Interacts with GRB2 (via SH3 2 domain). Interacts (phosphorylated) with PTPN11. Interacts with TNFRSF11A (via cytoplasmic domain). Interacts (phosphorylated) with 14-3-3 family proteins SFN, YWHAB, YWHAE, YWHAG, YWHAH, YWHAQ and YWHAZ; prevents interaction with GRB2 and attenuates GAB2 signaling. In terms of processing, phosphorylated upon EGF stimulation. Phosphorylated on tyrosine residues by HCK upon IL6 signaling. Phosphorylated on tyrosine residue(s) by the thrombopoietin receptor (TPOR), stem cell factor receptor (SCFR), and T-cell and B-cell antigen receptors, gp130, IL-2R and IL-3R. Phosphorylated upon stimulation of TNFRSF11A/RANK by TNFSF11/RANKL. Post-translationally, dephosphorylated by PTPN11. Ubiquitously expressed.

Its subcellular location is the cytoplasm. The protein resides in the cell membrane. It localises to the membrane raft. In terms of biological role, adapter protein which acts downstream of several membrane receptors including cytokine, antigen, hormone, cell matrix and growth factor receptors to regulate multiple signaling pathways. Regulates osteoclast differentiation mediating the TNFRSF11A/RANK signaling. In allergic response, it plays a role in mast cells activation and degranulation through PI-3-kinase regulation. Also involved in the regulation of cell proliferation and hematopoiesis. The chain is GRB2-associated-binding protein 2 (Gab2) from Mus musculus (Mouse).